The primary structure comprises 152 residues: Aspartate carbamoyltransferase regulatory chain (152 aa).

4 residues coordinate Zn(2+): Cys108, Cys113, Cys137, and Cys140.

It belongs to the PyrI family. In terms of assembly, contains catalytic and regulatory chains. The cofactor is Zn(2+).

Its function is as follows. Involved in allosteric regulation of aspartate carbamoyltransferase. The protein is Aspartate carbamoyltransferase regulatory chain of Neisseria meningitidis serogroup B (strain ATCC BAA-335 / MC58).